We begin with the raw amino-acid sequence, 325 residues long: 5-dehydro-2-deoxygluconokinase (325 aa).

Belongs to the carbohydrate kinase PfkB family.

It catalyses the reaction 5-dehydro-2-deoxy-D-gluconate + ATP = 6-phospho-5-dehydro-2-deoxy-D-gluconate + ADP + H(+). The protein operates within polyol metabolism; myo-inositol degradation into acetyl-CoA; acetyl-CoA from myo-inositol: step 5/7. Functionally, catalyzes the phosphorylation of 5-dehydro-2-deoxy-D-gluconate (2-deoxy-5-keto-D-gluconate or DKG) to 6-phospho-5-dehydro-2-deoxy-D-gluconate (DKGP). The protein is 5-dehydro-2-deoxygluconokinase (iolC) of Bacillus subtilis (strain 168).